We begin with the raw amino-acid sequence, 193 residues long: Crossover junction endodeoxyribonuclease RuvC (193 aa).

Catalysis depends on residues aspartate 7, glutamate 68, and aspartate 141. Aspartate 7, glutamate 68, and aspartate 141 together coordinate Mg(2+).

The protein belongs to the RuvC family. Homodimer which binds Holliday junction (HJ) DNA. The HJ becomes 2-fold symmetrical on binding to RuvC with unstacked arms; it has a different conformation from HJ DNA in complex with RuvA. In the full resolvosome a probable DNA-RuvA(4)-RuvB(12)-RuvC(2) complex forms which resolves the HJ. Mg(2+) serves as cofactor.

It is found in the cytoplasm. It catalyses the reaction Endonucleolytic cleavage at a junction such as a reciprocal single-stranded crossover between two homologous DNA duplexes (Holliday junction).. Functionally, the RuvA-RuvB-RuvC complex processes Holliday junction (HJ) DNA during genetic recombination and DNA repair. Endonuclease that resolves HJ intermediates. Cleaves cruciform DNA by making single-stranded nicks across the HJ at symmetrical positions within the homologous arms, yielding a 5'-phosphate and a 3'-hydroxyl group; requires a central core of homology in the junction. The consensus cleavage sequence is 5'-(A/T)TT(C/G)-3'. Cleavage occurs on the 3'-side of the TT dinucleotide at the point of strand exchange. HJ branch migration catalyzed by RuvA-RuvB allows RuvC to scan DNA until it finds its consensus sequence, where it cleaves and resolves the cruciform DNA. This is Crossover junction endodeoxyribonuclease RuvC from Bifidobacterium adolescentis (strain ATCC 15703 / DSM 20083 / NCTC 11814 / E194a).